Here is a 203-residue protein sequence, read N- to C-terminus: FMN-dependent NADH:quinone oxidoreductase (203 aa).

Residues S9, 15-17 (SVS), and 139-142 (TRGG) contribute to the FMN site.

The protein belongs to the azoreductase type 1 family. Homodimer. FMN is required as a cofactor.

It carries out the reaction 2 a quinone + NADH + H(+) = 2 a 1,4-benzosemiquinone + NAD(+). The enzyme catalyses N,N-dimethyl-1,4-phenylenediamine + anthranilate + 2 NAD(+) = 2-(4-dimethylaminophenyl)diazenylbenzoate + 2 NADH + 2 H(+). Its function is as follows. Quinone reductase that provides resistance to thiol-specific stress caused by electrophilic quinones. Also exhibits azoreductase activity. Catalyzes the reductive cleavage of the azo bond in aromatic azo compounds to the corresponding amines. This is FMN-dependent NADH:quinone oxidoreductase from Albidiferax ferrireducens (strain ATCC BAA-621 / DSM 15236 / T118) (Rhodoferax ferrireducens).